A 108-amino-acid chain; its full sequence is Large ribosomal subunit protein uL24 (108 aa).

Belongs to the universal ribosomal protein uL24 family. Part of the 50S ribosomal subunit.

Its function is as follows. One of two assembly initiator proteins, it binds directly to the 5'-end of the 23S rRNA, where it nucleates assembly of the 50S subunit. Functionally, one of the proteins that surrounds the polypeptide exit tunnel on the outside of the subunit. This is Large ribosomal subunit protein uL24 from Pelobacter propionicus (strain DSM 2379 / NBRC 103807 / OttBd1).